The primary structure comprises 620 residues: Cilia- and flagella-associated protein 52 (620 aa).

WD repeat units lie at residues 62-106 (GHSN…LMAR), 109-150 (LHKG…AICG), 156-195 (LNVG…RKIW), 203-242 (QMKR…LADT), 288-327 (QLQG…ETLV), 330-369 (CHFE…ELLR), 372-411 (VPNM…LMYV), 415-454 (AHRI…QKLE), 459-498 (EHKS…RNQM), 500-539 (LANT…GIRE), 543-582 (SLSG…VTHV), and 585-620 (GHSG…PFPS).

It belongs to the CFAP52 family. In terms of assembly, microtubule inner protein component of sperm flagellar doublet microtubules. Interacts with BRCA2. Interacts with the CCT chaperonin complex. Interacts with HSP70. Interacts with AK8. Interacts with CFAP45. Interacts with DNAI1. Interacts with IQDC. In terms of tissue distribution, expressed in respiratory cells and sperm (at protein level).

Its subcellular location is the cytoplasm. The protein localises to the cytoskeleton. It is found in the cilium axoneme. The protein resides in the flagellum axoneme. In terms of biological role, microtubule inner protein (MIP) part of the dynein-decorated doublet microtubules (DMTs) in cilia axoneme. Important for proper ciliary and flagellar beating. May act in cooperation with CFAP45 and axonemal dynein subunit DNAH11. May play a role in cell growth and/or survival. The sequence is that of Cilia- and flagella-associated protein 52 (CFAP52) from Sus scrofa (Pig).